A 355-amino-acid polypeptide reads, in one-letter code: Galectin-9 (355 aa).

2 Galectin domains span residues 17–148 and 227–355; these read FTGM…ISFQ and FFTS…HVQT. A beta-D-galactoside is bound by residues Asn48, His61, Arg65, Asn75, 82–88, His267, Arg271, Thr281, and 287–293; these read WGTEERK and WGSEERS.

It localises to the cytoplasm. The protein localises to the nucleus. The protein resides in the secreted. Functionally, binds galactosides. Has high affinity for the Forssman pentasaccharide. Ligand for HAVCR2/TIM3. Binding to HAVCR2 induces T-helper type 1 lymphocyte (Th1) death. Also stimulates bactericidal activity in infected macrophages by causing macrophage activation and IL1B secretion which restricts intracellular bacterial growth. Ligand for P4HB; the interaction retains P4HB at the cell surface of Th2 T helper cells, increasing disulfide reductase activity at the plasma membrane, altering the plasma membrane redox state and enhancing cell migration. Ligand for CD44; the interaction enhances binding of SMAD3 to the FOXP3 promoter, leading to up-regulation of FOXP3 expression and increased induced regulatory T (iTreg) cell stability and suppressive function. Promotes ability of mesenchymal stromal cells to suppress T-cell proliferation. Expands regulatory T-cells and induces cytotoxic T-cell apoptosis following virus infection. Activates ERK1/2 phosphorylation inducing cytokine (IL-6, IL-8, IL-12) and chemokine (CCL2) production in mast and dendritic cells. Inhibits degranulation and induces apoptosis of mast cells. Induces maturation and migration of dendritic cells. Inhibits natural killer (NK) cell function. Can transform NK cell phenotype from peripheral to decidual during pregnancy. Astrocyte derived galectin-9 enhances microglial TNF production. May play a role in thymocyte-epithelial interactions relevant to the biology of the thymus. May provide the molecular basis for urate flux across cell membranes, allowing urate that is formed during purine metabolism to efflux from cells and serving as an electrogenic transporter that plays an important role in renal and gastrointestinal urate excretion. Highly selective to the anion urate. This is Galectin-9 (LGALS9) from Bos taurus (Bovine).